The chain runs to 111 residues: Iron-sulfur cluster assembly protein CyaY (111 aa).

The protein belongs to the frataxin family.

In terms of biological role, involved in iron-sulfur (Fe-S) cluster assembly. May act as a regulator of Fe-S biogenesis. The chain is Iron-sulfur cluster assembly protein CyaY from Cupriavidus necator (strain ATCC 17699 / DSM 428 / KCTC 22496 / NCIMB 10442 / H16 / Stanier 337) (Ralstonia eutropha).